Consider the following 208-residue polypeptide: Small ribosomal subunit protein uS4 (208 aa).

The S4 RNA-binding domain maps to 95-157; that stretch reads RRIDNIVYRA…DSLKKLVRSN (63 aa).

This sequence belongs to the universal ribosomal protein uS4 family. In terms of assembly, part of the 30S ribosomal subunit. Contacts protein S5. The interaction surface between S4 and S5 is involved in control of translational fidelity.

Its function is as follows. One of the primary rRNA binding proteins, it binds directly to 16S rRNA where it nucleates assembly of the body of the 30S subunit. With S5 and S12 plays an important role in translational accuracy. The protein is Small ribosomal subunit protein uS4 of Borrelia duttonii (strain Ly).